Consider the following 142-residue polypeptide: MAKKVDGYIKLQVAAGAANPSPPVGPALGQKGVNIMEFCKAFNARTDKFEKGMPIPVVITVYSDRSFTFETKTPPASFLLLKAAGLKSGSGRPNTEKVGTIKRSAVQEIAETKAADMTGADIEAMTRSIEGTARSMGLVVED.

The protein belongs to the universal ribosomal protein uL11 family. Part of the ribosomal stalk of the 50S ribosomal subunit. Interacts with L10 and the large rRNA to form the base of the stalk. L10 forms an elongated spine to which L12 dimers bind in a sequential fashion forming a multimeric L10(L12)X complex. One or more lysine residues are methylated.

In terms of biological role, forms part of the ribosomal stalk which helps the ribosome interact with GTP-bound translation factors. In Shewanella halifaxensis (strain HAW-EB4), this protein is Large ribosomal subunit protein uL11.